Reading from the N-terminus, the 493-residue chain is Ubiquitin carboxyl-terminal hydrolase 14 (493 aa).

Positions 4 to 80 constitute a Ubiquitin-like domain; the sequence is YSVTVKWGKE…MMGSADALPE (77 aa). At threonine 52 the chain carries Phosphothreonine. In terms of domain architecture, USP spans 105–482; sequence CGLTNLGNTC…IAYVLLYGPR (378 aa). The active-site Nucleophile is cysteine 114. Serine 143, serine 148, serine 236, serine 301, and serine 431 each carry phosphoserine. The active-site Proton acceptor is histidine 434. An N6-acetyllysine modification is found at lysine 448.

Belongs to the peptidase C19 family. USP14/UBP6 subfamily. As to quaternary structure, homodimer (Potential). Associates with the 26S proteasome. Interacts with FANCC, CXCR4 and ERN1. Interacts with TRIM14; this interaction recruits USP14 to cleave ubiquitin chains of CGAS.

It is found in the cytoplasm. The protein localises to the cell membrane. It catalyses the reaction Thiol-dependent hydrolysis of ester, thioester, amide, peptide and isopeptide bonds formed by the C-terminal Gly of ubiquitin (a 76-residue protein attached to proteins as an intracellular targeting signal).. Functionally, proteasome-associated deubiquitinase which releases ubiquitin from the proteasome targeted ubiquitinated proteins. Ensures the regeneration of ubiquitin at the proteasome. Is a reversibly associated subunit of the proteasome and a large fraction of proteasome-free protein exists within the cell. Required for the degradation of the chemokine receptor CXCR4 which is critical for CXCL12-induced cell chemotaxis. Also serves as a physiological inhibitor of endoplasmic reticulum-associated degradation (ERAD) under the non-stressed condition by inhibiting the degradation of unfolded endoplasmic reticulum proteins via interaction with ERN1. Indispensable for synaptic development and function at neuromuscular junctions (NMJs). Plays a role in the innate immune defense against viruses by stabilizing the viral DNA sensor CGAS and thus inhibiting its autophagic degradation. In Oryctolagus cuniculus (Rabbit), this protein is Ubiquitin carboxyl-terminal hydrolase 14 (USP14).